The sequence spans 92 residues: Putative septation protein SpoVG (92 aa).

This sequence belongs to the SpoVG family.

In terms of biological role, could be involved in septation. This chain is Putative septation protein SpoVG, found in Clostridioides difficile (strain 630) (Peptoclostridium difficile).